The chain runs to 40 residues: Protein YneP (40 aa).

In Escherichia coli (strain K12), this protein is Protein YneP.